A 445-amino-acid chain; its full sequence is Phosphoglucosamine mutase (445 aa).

Ser102 functions as the Phosphoserine intermediate in the catalytic mechanism. The Mg(2+) site is built by Ser102, Asp241, Asp243, and Asp245. At Ser102 the chain carries Phosphoserine.

The protein belongs to the phosphohexose mutase family. Mg(2+) is required as a cofactor. Post-translationally, activated by phosphorylation.

The enzyme catalyses alpha-D-glucosamine 1-phosphate = D-glucosamine 6-phosphate. In terms of biological role, catalyzes the conversion of glucosamine-6-phosphate to glucosamine-1-phosphate. This is Phosphoglucosamine mutase from Escherichia coli O127:H6 (strain E2348/69 / EPEC).